Consider the following 161-residue polypeptide: MKNQTPCRVSKITTITQNKRVRYEYFIEQEFEAGISLLGWEVKSLRAGIVHINDSYILLKDSEAFLLGATLRPLIVASSHILYSPMRSRKLLLRRRELDTLLGKVHRKGYTIVPISLYWRNSLAKIQLGIAKGKKQYDKRHCIKEREWLLNKARITKLVHR.

The protein belongs to the SmpB family.

It localises to the cytoplasm. Its function is as follows. Required for rescue of stalled ribosomes mediated by trans-translation. Binds to transfer-messenger RNA (tmRNA), required for stable association of tmRNA with ribosomes. tmRNA and SmpB together mimic tRNA shape, replacing the anticodon stem-loop with SmpB. tmRNA is encoded by the ssrA gene; the 2 termini fold to resemble tRNA(Ala) and it encodes a 'tag peptide', a short internal open reading frame. During trans-translation Ala-aminoacylated tmRNA acts like a tRNA, entering the A-site of stalled ribosomes, displacing the stalled mRNA. The ribosome then switches to translate the ORF on the tmRNA; the nascent peptide is terminated with the 'tag peptide' encoded by the tmRNA and targeted for degradation. The ribosome is freed to recommence translation, which seems to be the essential function of trans-translation. The protein is SsrA-binding protein of Baumannia cicadellinicola subsp. Homalodisca coagulata.